The primary structure comprises 118 residues: Large ribosomal subunit protein bL20c (118 aa).

It belongs to the bacterial ribosomal protein bL20 family.

The protein localises to the plastid. Its function is as follows. Binds directly to 23S ribosomal RNA and is necessary for the in vitro assembly process of the 50S ribosomal subunit. It is not involved in the protein synthesizing functions of that subunit. This is Large ribosomal subunit protein bL20c (rpl20) from Cuscuta reflexa (Southern Asian dodder).